Here is a 379-residue protein sequence, read N- to C-terminus: Probable protein phosphatase 2C 46 (379 aa).

Positions 1 to 20 are cleaved as a signal peptide; that stretch reads MLSTLMKLLSACLWPSSSSG. A PPM-type phosphatase domain is found at 42 to 353; the sequence is LVGEFSMAVV…DDITVVIIFL (312 aa). Position 73 is a phosphoserine (Ser-73). Mn(2+)-binding residues include Asp-84, Gly-85, Asp-285, and Asp-344.

This sequence belongs to the PP2C family. In terms of assembly, interacts with SAUR19. It depends on Mg(2+) as a cofactor. Mn(2+) is required as a cofactor.

It catalyses the reaction O-phospho-L-seryl-[protein] + H2O = L-seryl-[protein] + phosphate. The catalysed reaction is O-phospho-L-threonyl-[protein] + H2O = L-threonyl-[protein] + phosphate. Its function is as follows. May dephosphorylate and repress plasma membrane H(+)-ATPases (PM H(+)-ATPases, e.g. AHA1 and AHA2), thus influencing negatively plant growth and fitness. This chain is Probable protein phosphatase 2C 46, found in Arabidopsis thaliana (Mouse-ear cress).